The sequence spans 250 residues: 23S rRNA (guanosine-2'-O-)-methyltransferase RlmB (250 aa).

Residues G198, L218, and L227 each coordinate S-adenosyl-L-methionine.

The protein belongs to the class IV-like SAM-binding methyltransferase superfamily. RNA methyltransferase TrmH family. RlmB subfamily.

The protein localises to the cytoplasm. The catalysed reaction is guanosine(2251) in 23S rRNA + S-adenosyl-L-methionine = 2'-O-methylguanosine(2251) in 23S rRNA + S-adenosyl-L-homocysteine + H(+). Its function is as follows. Specifically methylates the ribose of guanosine 2251 in 23S rRNA. The chain is 23S rRNA (guanosine-2'-O-)-methyltransferase RlmB from Pseudomonas syringae pv. tomato (strain ATCC BAA-871 / DC3000).